Reading from the N-terminus, the 252-residue chain is Probable transcriptional regulatory protein Fnod_1106 (252 aa).

Belongs to the TACO1 family.

Its subcellular location is the cytoplasm. This Fervidobacterium nodosum (strain ATCC 35602 / DSM 5306 / Rt17-B1) protein is Probable transcriptional regulatory protein Fnod_1106.